The sequence spans 298 residues: GTP cyclohydrolase FolE2 (298 aa).

Belongs to the GTP cyclohydrolase IV family.

The enzyme catalyses GTP + H2O = 7,8-dihydroneopterin 3'-triphosphate + formate + H(+). The protein operates within cofactor biosynthesis; 7,8-dihydroneopterin triphosphate biosynthesis; 7,8-dihydroneopterin triphosphate from GTP: step 1/1. In terms of biological role, converts GTP to 7,8-dihydroneopterin triphosphate. The protein is GTP cyclohydrolase FolE2 of Pseudomonas aeruginosa (strain LESB58).